A 530-amino-acid chain; its full sequence is Putative ABC transporter ATP-binding protein SSO1893 (530 aa).

ABC transporter domains follow at residues 6-243 (IRDL…LGLE) and 282-516 (ILFA…EPPL). ATP contacts are provided by residues 38 to 45 (GRSGSGKS) and 314 to 321 (GKNGSGKT).

The protein belongs to the ABC transporter superfamily.

It is found in the cell membrane. In terms of biological role, probably part of an ABC transporter complex. Responsible for energy coupling to the transport system. This chain is Putative ABC transporter ATP-binding protein SSO1893, found in Saccharolobus solfataricus (strain ATCC 35092 / DSM 1617 / JCM 11322 / P2) (Sulfolobus solfataricus).